Reading from the N-terminus, the 151-residue chain is 3-dehydroquinate dehydratase (151 aa).

The active-site Proton acceptor is Tyr24. Substrate-binding residues include Asn76, His82, and Asp89. His102 serves as the catalytic Proton donor. Residues 103-104 and Arg113 contribute to the substrate site; that span reads VS.

Belongs to the type-II 3-dehydroquinase family. As to quaternary structure, homododecamer.

It carries out the reaction 3-dehydroquinate = 3-dehydroshikimate + H2O. The protein operates within metabolic intermediate biosynthesis; chorismate biosynthesis; chorismate from D-erythrose 4-phosphate and phosphoenolpyruvate: step 3/7. Its function is as follows. Catalyzes a trans-dehydration via an enolate intermediate. This chain is 3-dehydroquinate dehydratase, found in Afipia carboxidovorans (strain ATCC 49405 / DSM 1227 / KCTC 32145 / OM5) (Oligotropha carboxidovorans).